A 375-amino-acid polypeptide reads, in one-letter code: 23S rRNA (uracil(747)-C(5))-methyltransferase RlmC (375 aa).

[4Fe-4S] cluster contacts are provided by cysteine 3, cysteine 11, cysteine 14, and cysteine 87. The S-adenosyl-L-methionine site is built by glutamine 212, phenylalanine 241, glutamate 262, and asparagine 307. The Nucleophile role is filled by cysteine 334.

The protein belongs to the class I-like SAM-binding methyltransferase superfamily. RNA M5U methyltransferase family. RlmC subfamily.

It catalyses the reaction uridine(747) in 23S rRNA + S-adenosyl-L-methionine = 5-methyluridine(747) in 23S rRNA + S-adenosyl-L-homocysteine + H(+). Catalyzes the formation of 5-methyl-uridine at position 747 (m5U747) in 23S rRNA. The chain is 23S rRNA (uracil(747)-C(5))-methyltransferase RlmC from Escherichia coli O127:H6 (strain E2348/69 / EPEC).